The sequence spans 446 residues: Putative diacyglycerol O-acyltransferase Rv3371 (446 aa).

His-129 (proton acceptor) is an active-site residue. Positions 425 to 446 (SRALPSAARRGRPSVPTARARH) are disordered.

The protein belongs to the long-chain O-acyltransferase family.

The enzyme catalyses an acyl-CoA + a 1,2-diacyl-sn-glycerol = a triacyl-sn-glycerol + CoA. The catalysed reaction is di-(9Z)-octadecenoylglycerol + (9Z)-octadecenoyl-CoA = 1,2,3-tri-(9Z-octadecenoyl)-glycerol + CoA. Its pathway is glycerolipid metabolism; triacylglycerol biosynthesis. In terms of biological role, catalyzes the terminal and only committed step in triacylglycerol synthesis by using diacylglycerol and fatty acyl CoA as substrates. Required for storage lipid synthesis. Functionally, upon expression in E.coli functions weakly as a triacylglycerol synthase, making triacylglycerol (TG) from diolein and long-chain fatty acyl-CoA. Has no wax synthase activity to produce wax esters. The protein is Putative diacyglycerol O-acyltransferase Rv3371 of Mycobacterium tuberculosis (strain ATCC 25618 / H37Rv).